A 354-amino-acid polypeptide reads, in one-letter code: Holliday junction branch migration complex subunit RuvB (354 aa).

Positions 1-38 (MSDFERTEFELPPGVGHSQNEDLNPQQTAGDSDIDTSL) are disordered. A large ATPase domain (RuvB-L) region spans residues 2 to 199 (SDFERTEFEL…FGFTAQMEFY (198 aa)). The segment covering 17–30 (HSQNEDLNPQQTAG) has biased composition (polar residues). ATP is bound by residues L38, R39, G80, K83, T84, T85, 146-148 (EDF), R189, Y199, and R236. T84 provides a ligand contact to Mg(2+). Residues 200-270 (DTADLTRVVT…VARAALLVFD (71 aa)) are small ATPAse domain (RuvB-S). Positions 273-354 (ESGLDRLDRA…LEPPEGTIGL (82 aa)) are head domain (RuvB-H). The DNA site is built by R328 and R333.

It belongs to the RuvB family. Homohexamer. Forms an RuvA(8)-RuvB(12)-Holliday junction (HJ) complex. HJ DNA is sandwiched between 2 RuvA tetramers; dsDNA enters through RuvA and exits via RuvB. An RuvB hexamer assembles on each DNA strand where it exits the tetramer. Each RuvB hexamer is contacted by two RuvA subunits (via domain III) on 2 adjacent RuvB subunits; this complex drives branch migration. In the full resolvosome a probable DNA-RuvA(4)-RuvB(12)-RuvC(2) complex forms which resolves the HJ.

The protein resides in the cytoplasm. The catalysed reaction is ATP + H2O = ADP + phosphate + H(+). Its function is as follows. The RuvA-RuvB-RuvC complex processes Holliday junction (HJ) DNA during genetic recombination and DNA repair, while the RuvA-RuvB complex plays an important role in the rescue of blocked DNA replication forks via replication fork reversal (RFR). RuvA specifically binds to HJ cruciform DNA, conferring on it an open structure. The RuvB hexamer acts as an ATP-dependent pump, pulling dsDNA into and through the RuvAB complex. RuvB forms 2 homohexamers on either side of HJ DNA bound by 1 or 2 RuvA tetramers; 4 subunits per hexamer contact DNA at a time. Coordinated motions by a converter formed by DNA-disengaged RuvB subunits stimulates ATP hydrolysis and nucleotide exchange. Immobilization of the converter enables RuvB to convert the ATP-contained energy into a lever motion, pulling 2 nucleotides of DNA out of the RuvA tetramer per ATP hydrolyzed, thus driving DNA branch migration. The RuvB motors rotate together with the DNA substrate, which together with the progressing nucleotide cycle form the mechanistic basis for DNA recombination by continuous HJ branch migration. Branch migration allows RuvC to scan DNA until it finds its consensus sequence, where it cleaves and resolves cruciform DNA. The sequence is that of Holliday junction branch migration complex subunit RuvB from Corynebacterium jeikeium (strain K411).